Consider the following 208-residue polypeptide: Protein TIC 20-II, chloroplastic (208 aa).

The N-terminal 49 residues, 1–49, are a transit peptide targeting the chloroplast; it reads MASLCLSLHQTLTNPLSAPRCRPLSLSFPGSSTFSIRPSSRRATALTTR. Transmembrane regions (helical) follow at residues 61–83, 101–121, 134–154, and 172–192; these read VISI…FLFA, LYRS…LGVV, AMQA…TRIL, and TGVF…SLLG.

This sequence belongs to the Tic20 family. In terms of assembly, part of the Tic complex. As to expression, expressed in leaves, siliques and roots.

It localises to the plastid. It is found in the chloroplast inner membrane. Its function is as follows. May be involved in protein precursor import into chloroplasts. Not redundant with TIC20-I, TIC20-IV or TIC20-V. This Arabidopsis thaliana (Mouse-ear cress) protein is Protein TIC 20-II, chloroplastic (TIC20-II).